The primary structure comprises 239 residues: Ribose-5-phosphate isomerase A (239 aa).

Residues 40 to 43 (SGST), 96 to 99 (DGAD), and 110 to 113 (KGGG) each bind substrate. The active-site Proton acceptor is the Glu119. Lys137 is a binding site for substrate.

It belongs to the ribose 5-phosphate isomerase family. In terms of assembly, homodimer.

It carries out the reaction aldehydo-D-ribose 5-phosphate = D-ribulose 5-phosphate. It functions in the pathway carbohydrate degradation; pentose phosphate pathway; D-ribose 5-phosphate from D-ribulose 5-phosphate (non-oxidative stage): step 1/1. Its function is as follows. Catalyzes the reversible conversion of ribose-5-phosphate to ribulose 5-phosphate. This chain is Ribose-5-phosphate isomerase A, found in Methanococcus vannielii (strain ATCC 35089 / DSM 1224 / JCM 13029 / OCM 148 / SB).